Reading from the N-terminus, the 579-residue chain is uncharacterized protein (579 aa).

12 consecutive transmembrane segments (helical) span residues 20-40 (ALWA…VVAI), 54-74 (ATVV…MLVA), 86-106 (LYLI…LSSG), 142-162 (GVAL…GPLA), 174-194 (WIFF…AYLI), 204-224 (FDWF…FGLQ), 234-254 (WIWA…YWQA), 279-299 (IAII…YAQA), 310-330 (VLFA…GMII), 335-355 (PLCV…WLLC), 366-386 (LVLP…PLTV), and 467-487 (MLLP…LVDF). Positions 516–579 (REPEEDCDTQ…DTESTAPSAL (64 aa)) are disordered. Positions 526–540 (PLRASRPAAAAASRS) are enriched in low complexity. The segment covering 570 to 579 (DTESTAPSAL) has biased composition (polar residues).

The protein belongs to the major facilitator superfamily. EmrB family.

The protein localises to the cell membrane. This is an uncharacterized protein from Mycobacterium tuberculosis (strain ATCC 25618 / H37Rv).